A 179-amino-acid chain; its full sequence is Large ribosomal subunit protein uL10 (179 aa).

Belongs to the universal ribosomal protein uL10 family. In terms of assembly, part of the ribosomal stalk of the 50S ribosomal subunit. The N-terminus interacts with L11 and the large rRNA to form the base of the stalk. The C-terminus forms an elongated spine to which L12 dimers bind in a sequential fashion forming a multimeric L10(L12)X complex.

Functionally, forms part of the ribosomal stalk, playing a central role in the interaction of the ribosome with GTP-bound translation factors. This chain is Large ribosomal subunit protein uL10, found in Polynucleobacter necessarius subsp. necessarius (strain STIR1).